We begin with the raw amino-acid sequence, 203 residues long: Small ribosomal subunit protein uS4 (203 aa).

Residues 93–156 form the S4 RNA-binding domain; that stretch reads RRLDNVVYRL…MKVPAILEAV (64 aa).

This sequence belongs to the universal ribosomal protein uS4 family. In terms of assembly, part of the 30S ribosomal subunit. Contacts protein S5. The interaction surface between S4 and S5 is involved in control of translational fidelity.

Functionally, one of the primary rRNA binding proteins, it binds directly to 16S rRNA where it nucleates assembly of the body of the 30S subunit. In terms of biological role, with S5 and S12 plays an important role in translational accuracy. The sequence is that of Small ribosomal subunit protein uS4 from Streptococcus uberis (strain ATCC BAA-854 / 0140J).